A 471-amino-acid polypeptide reads, in one-letter code: dTDP-4-dehydro-6-deoxy-alpha-D-glucopyranose 2,3-dehydratase (471 aa).

DTDP-4-dehydro-6-deoxy-alpha-D-glucose-binding positions include Trp-67, 155-159, Ser-193, Asn-238, Trp-288, Arg-351, 367-369, 372-373, and 405-408; these read TRSNY, QCT, NY, and EGGR.

It belongs to the hexose 2,3-dehydratase family. Homodimer.

It carries out the reaction dTDP-4-dehydro-6-deoxy-alpha-D-glucose = dTDP-3,4-didehydro-2,6-dideoxy-alpha-D-glucose + H2O. It participates in antibiotic biosynthesis. Involved in the biosynthesis of the 2,3,6-trideoxysugar L-epivancosamine, the terminal sugar added to the aglycone scaffold of chloroeremomycin, a member of the glycopeptide antibiotics vancomycin family. Catalyzes the removal of the hydroxyl group at position C-2 of the hexose ring of dTDP-4-dehydro-6-deoxy-alpha-D-glucopyranose, and the oxidation of the hydroxyl group at position C-3 to form a carbonyl functionality. The product of the reaction, dTDP-2,6-dideoxy-D-glycero-hex-2-enos-4-ulose, is a highly unstable diketosugar, which spontaneously forms dTDP-3,4-didehydro-2,6-dideoxy-alpha-D-glucose. The chain is dTDP-4-dehydro-6-deoxy-alpha-D-glucopyranose 2,3-dehydratase from Amycolatopsis orientalis (Nocardia orientalis).